The sequence spans 431 residues: MGKNVVVLGTQWGDEGKGKIVDLLTEQAKYVVRYQGGHNAGHTLVINGDKTVLHLIPSGILRDNVKCIIGNGVVLAPDALMKEINMLKERGIPVEERLLISEACPLILPFHSALDIAREKARGNKAIGTTGRGIGPAYEDKISRRGLRVGDLFNAELFAEKLKEVMAYHNFMLTEYYKVDAVDYEQTLSDALALADYLKSMCVDVTELLDNARKAGEPILFEGAQGTLLDIDHGTYPFVTSSNTTAGGVATGSGFGPRHLDYVLGIMKAYTTRVGAGPFPTELLCEVGDHLGTKGHEFGATTGRKRRPGWLDAVAMRRAVQINSVSGFCLTKLDVLDGLKEVKICVGYQHPDGTISKVTPLAAEGYEQVTPVYETMPGWSESTFGATFLEQLPQAAINYIKRIEELLETPIDIISTGPDRNETMILVSPFN.

Residues 13–19 and 41–43 contribute to the GTP site; these read GDEGKGK and GHT. Residue Asp-14 is the Proton acceptor of the active site. Mg(2+) is bound by residues Asp-14 and Gly-41. Residues 14–17, 39–42, Thr-130, Arg-144, Gln-225, Thr-240, and Arg-304 contribute to the IMP site; these read DEGK and NAGH. His-42 functions as the Proton donor in the catalytic mechanism. 300-306 contacts substrate; it reads ATTGRKR. GTP is bound by residues Arg-306, 332-334, and 415-417; these read KLD and STG.

The protein belongs to the adenylosuccinate synthetase family. As to quaternary structure, homodimer. Mg(2+) is required as a cofactor.

It is found in the cytoplasm. The enzyme catalyses IMP + L-aspartate + GTP = N(6)-(1,2-dicarboxyethyl)-AMP + GDP + phosphate + 2 H(+). Its pathway is purine metabolism; AMP biosynthesis via de novo pathway; AMP from IMP: step 1/2. In terms of biological role, plays an important role in the de novo pathway of purine nucleotide biosynthesis. Catalyzes the first committed step in the biosynthesis of AMP from IMP. This chain is Adenylosuccinate synthetase, found in Shewanella oneidensis (strain ATCC 700550 / JCM 31522 / CIP 106686 / LMG 19005 / NCIMB 14063 / MR-1).